The primary structure comprises 418 residues: MEVTQMTSPIHNYSEIGKLKTVLLKRPGREIENFTPDMMPRLLFDDIPYLPIAQKEHDYFADTLRDNGVEVLYLEKLSAEALDAGGEEVRNHFLEQMLTESGYAAGSIHDALKEYLGSMNNQDMVVKIMEGVRKNELDFVPKDLVSCAENQDYEFYMDPMPNLYFTRDPSACIGDGLSINHMTFVARQRESLFNETIIKYHPRFANKGIHVWRDRNHTTRIEGGDELVLNNHVMAIGVSQRTSADAIQDIAKNLFKDGQYDTVIAIKIPHNHAMMHLDTVFTMINYDQFTVHPGILGKGGQIDTWTITPGKNEGELNLQHDTDLKKVLKTALNLDDLDLIPTGNGDPIIAGREQWNDGSNTLAIAPGVVVTYNRNYVSNELLRKHGLKVLEVISSELSRGRGGPRCMSCPIVREDLKK.

Cysteine 406 functions as the Amidino-cysteine intermediate in the catalytic mechanism.

The protein belongs to the arginine deiminase family.

Its subcellular location is the cytoplasm. It catalyses the reaction L-arginine + H2O = L-citrulline + NH4(+). Its pathway is amino-acid degradation; L-arginine degradation via ADI pathway; carbamoyl phosphate from L-arginine: step 1/2. In Lentilactobacillus hilgardii (Lactobacillus hilgardii), this protein is Arginine deiminase.